The chain runs to 410 residues: Cysteine desulfurase IscS (410 aa).

Residues 80–81, Asn-160, Gln-188, and 208–210 contribute to the pyridoxal 5'-phosphate site; these read AT and SGH. The residue at position 211 (Lys-211) is an N6-(pyridoxal phosphate)lysine. Thr-248 lines the pyridoxal 5'-phosphate pocket. The active-site Cysteine persulfide intermediate is the Cys-334. Position 334 (Cys-334) interacts with [2Fe-2S] cluster.

Belongs to the class-V pyridoxal-phosphate-dependent aminotransferase family. NifS/IscS subfamily. As to quaternary structure, homodimer. Forms a heterotetramer with IscU, interacts with other sulfur acceptors. It depends on pyridoxal 5'-phosphate as a cofactor.

Its subcellular location is the cytoplasm. It carries out the reaction (sulfur carrier)-H + L-cysteine = (sulfur carrier)-SH + L-alanine. The protein operates within cofactor biosynthesis; iron-sulfur cluster biosynthesis. In terms of biological role, master enzyme that delivers sulfur to a number of partners involved in Fe-S cluster assembly, tRNA modification or cofactor biosynthesis. Catalyzes the removal of elemental sulfur atoms from cysteine to produce alanine. Functions as a sulfur delivery protein for Fe-S cluster synthesis onto IscU, an Fe-S scaffold assembly protein, as well as other S acceptor proteins. This Rickettsia prowazekii (strain Madrid E) protein is Cysteine desulfurase IscS.